Reading from the N-terminus, the 141-residue chain is Hemoglobin subunit alpha (141 aa).

Residues 1 to 141 form the Globin domain; the sequence is VLSPDDKKHV…VSTVLTSKYR (141 aa). Serine 3 carries the phosphoserine modification. Lysine 7 and lysine 11 each carry N6-succinyllysine. Lysine 16 is subject to N6-acetyllysine; alternate. Lysine 16 carries the N6-succinyllysine; alternate modification. A Phosphotyrosine modification is found at tyrosine 24. Serine 35 is modified (phosphoserine). Lysine 40 is subject to N6-succinyllysine. A Phosphoserine modification is found at serine 49. O2 is bound at residue histidine 58. A heme b-binding site is contributed by histidine 87. Phosphoserine is present on serine 102. A Phosphothreonine modification is found at threonine 108. Residues serine 124 and serine 131 each carry the phosphoserine modification. Phosphothreonine occurs at positions 134 and 137. Position 138 is a phosphoserine (serine 138).

Belongs to the globin family. As to quaternary structure, heterotetramer of two alpha chains and two beta chains. Red blood cells.

Functionally, involved in oxygen transport from the lung to the various peripheral tissues. Hemopressin acts as an antagonist peptide of the cannabinoid receptor CNR1. Hemopressin-binding efficiently blocks cannabinoid receptor CNR1 and subsequent signaling. In Cercocebus atys (Sooty mangabey), this protein is Hemoglobin subunit alpha (HBA).